The primary structure comprises 191 residues: MAVKIIVGLGNPGPKYQWTRHNAGFMVLDRLSHLAGIAISKKTFSGVCGEGNWQGERLILLKPQTFMNLSGRSAAEAIRFHKLPIEDLIVIHDDLDIPFGRVKLKQGGGHAGHNGLRSLAQELGSGDFVRVRVGIGRPVHGDVVNYVLNNFSPEEMASLPRLLDGVVDLVEMLAREGLPKTMSLYNNKDLI.

Position 16 (Tyr16) interacts with tRNA. Residue His21 is the Proton acceptor of the active site. 3 residues coordinate tRNA: Phe66, Asn68, and Asn114.

This sequence belongs to the PTH family. In terms of assembly, monomer.

The protein localises to the cytoplasm. The enzyme catalyses an N-acyl-L-alpha-aminoacyl-tRNA + H2O = an N-acyl-L-amino acid + a tRNA + H(+). Its function is as follows. Hydrolyzes ribosome-free peptidyl-tRNAs (with 1 or more amino acids incorporated), which drop off the ribosome during protein synthesis, or as a result of ribosome stalling. Catalyzes the release of premature peptidyl moieties from peptidyl-tRNA molecules trapped in stalled 50S ribosomal subunits, and thus maintains levels of free tRNAs and 50S ribosomes. This chain is Peptidyl-tRNA hydrolase, found in Geotalea daltonii (strain DSM 22248 / JCM 15807 / FRC-32) (Geobacter daltonii).